The primary structure comprises 249 residues: Triosephosphate isomerase (249 aa).

Substrate is bound at residue 9–11 (NWK). The active-site Electrophile is His94. The active-site Proton acceptor is Glu166. Substrate contacts are provided by residues Gly172 and 232–233 (GG).

It belongs to the triosephosphate isomerase family. Homodimer.

Its subcellular location is the cytoplasm. The enzyme catalyses D-glyceraldehyde 3-phosphate = dihydroxyacetone phosphate. It functions in the pathway carbohydrate biosynthesis; gluconeogenesis. It participates in carbohydrate degradation; glycolysis; D-glyceraldehyde 3-phosphate from glycerone phosphate: step 1/1. Functionally, involved in the gluconeogenesis. Catalyzes stereospecifically the conversion of dihydroxyacetone phosphate (DHAP) to D-glyceraldehyde-3-phosphate (G3P). The sequence is that of Triosephosphate isomerase from Xylella fastidiosa (strain 9a5c).